The chain runs to 529 residues: Bifunctional purine biosynthesis protein PurH (529 aa).

The MGS-like domain occupies 1–148 (MQQRRPVRRA…KNHKDVAIVV (148 aa)). Lys287 is subject to N6-acetyllysine.

It belongs to the PurH family.

It carries out the reaction (6R)-10-formyltetrahydrofolate + 5-amino-1-(5-phospho-beta-D-ribosyl)imidazole-4-carboxamide = 5-formamido-1-(5-phospho-D-ribosyl)imidazole-4-carboxamide + (6S)-5,6,7,8-tetrahydrofolate. It catalyses the reaction IMP + H2O = 5-formamido-1-(5-phospho-D-ribosyl)imidazole-4-carboxamide. It functions in the pathway purine metabolism; IMP biosynthesis via de novo pathway; 5-formamido-1-(5-phospho-D-ribosyl)imidazole-4-carboxamide from 5-amino-1-(5-phospho-D-ribosyl)imidazole-4-carboxamide (10-formyl THF route): step 1/1. It participates in purine metabolism; IMP biosynthesis via de novo pathway; IMP from 5-formamido-1-(5-phospho-D-ribosyl)imidazole-4-carboxamide: step 1/1. The polypeptide is Bifunctional purine biosynthesis protein PurH (Escherichia coli O17:K52:H18 (strain UMN026 / ExPEC)).